The chain runs to 78 residues: Conotoxin CaFr179 (78 aa).

The N-terminal stretch at 1 to 19 is a signal peptide; sequence MSGLGIMVLTLLLLVFMEA. The propeptide occupies 20 to 44; sequence SHQDAGEKQATQRDAINVRRRRSLA. 3 disulfide bridges follow: Cys52–Cys64, Cys56–Cys72, and Cys63–Cys76. Phenylalanine amide is present on Phe77.

It belongs to the conotoxin O3 superfamily. Expressed by the venom duct.

It is found in the secreted. This is Conotoxin CaFr179 from Conus caracteristicus (Characteristic cone).